The following is a 332-amino-acid chain: MVQVAVMGAGSWGTTVAKVFADSGNPVTLWARRDEVADDVNDNHRNSAYLGDVDLPEGLSATTDPAAALHGAEIVVLGVPSQTLRSNLSSWREHIEPNATIISLAKGIEYETGMRMSQVIADVAGVGSDRVAVLTGPNLAKEVAQGQPAATLIACEDDERARFVQSAVAAPYFRPYTSQDVLGAEVAGTSKNVIALAAGIAAGCGFGANTNATVITRGLAETTRLALQLGADARTMAGLAGMGDLVATCTSPLSRNRSFGQRLGEGAGLEAAAEATKGQVAEGVVSCRSVQALARKAGVEMPITDAVVQVCYEDASPKEIINQLLGRTRKPE.

5 residues coordinate NADPH: Ser11, Trp12, Arg32, Arg33, and Lys106. Lys106 and Gly136 together coordinate sn-glycerol 3-phosphate. Ala140 provides a ligand contact to NADPH. Lys191, Asp244, Ser254, Arg255, and Asn256 together coordinate sn-glycerol 3-phosphate. The active-site Proton acceptor is the Lys191. Arg255 contacts NADPH. Positions 280 and 282 each coordinate NADPH.

The protein belongs to the NAD-dependent glycerol-3-phosphate dehydrogenase family.

The protein resides in the cytoplasm. The enzyme catalyses sn-glycerol 3-phosphate + NAD(+) = dihydroxyacetone phosphate + NADH + H(+). It carries out the reaction sn-glycerol 3-phosphate + NADP(+) = dihydroxyacetone phosphate + NADPH + H(+). The protein operates within membrane lipid metabolism; glycerophospholipid metabolism. Functionally, catalyzes the reduction of the glycolytic intermediate dihydroxyacetone phosphate (DHAP) to sn-glycerol 3-phosphate (G3P), the key precursor for phospholipid synthesis. In Corynebacterium urealyticum (strain ATCC 43042 / DSM 7109), this protein is Glycerol-3-phosphate dehydrogenase [NAD(P)+].